Reading from the N-terminus, the 480-residue chain is Glucosylglycerol phosphorylase (480 aa).

Catalysis depends on Asp190, which acts as the Nucleophile. Tyr194 contributes to the substrate binding site. Glu231 serves as the catalytic Proton donor. Gln336 contributes to the substrate binding site.

Belongs to the glycosyl hydrolase 13 family. Sucrose phosphorylase subfamily.

It catalyses the reaction 2-O-(alpha-D-glucopyranosyl)glycerol + phosphate = alpha-D-glucose 1-phosphate + glycerol. Its function is as follows. Catalyzes the reversible phosphorolysis of 2-O-alpha-D-glucosylglycerol with retention of the anomeric configuration, forming alpha-D-glucose 1-phosphate and glycerol. Has most likely a catabolic role, either regulating the intracellular levels of glucosylglycerol, which acts as a compatible solute, or degrading it when the environmental conditions change. Cannot catalyze the phosphorolysis of sucrose or glucosylglycerate. The polypeptide is Glucosylglycerol phosphorylase (Marinobacter adhaerens (strain DSM 23420 / HP15)).